Here is a 511-residue protein sequence, read N- to C-terminus: MTDIVLEPGAAPLSVWREIWRGAGVRLDPAAHAVVAQSAEAVTRILARGEPVYGINTGFGKLATVRIEDADLATLQRNLVLSHAAGVGEASPRAVVRLMMALKLASLAQGASGVRPVTVQLLERMIAQDLIPVVPGQGSVGASGDLAPLAHMAAAMLGVGEIETAGQRLPAGEALAAAGLAPLALGPKEGLALLNGTQFSTANALAGLFEAERLFRSALVTGALSTEAAKGSDTPFDARIHALRRQPGQVEAARALRELMAGSAIRASHLKDDERVQDPYCLRCQPQVMGAALDVLRQAAATLGFEANGVSDNPLIFAGDTNNGEDEALSGGNFHAEPVAFAADMIALAVCEIGSIAERRIAMLVDPALSGLPAFLTPKPGLNSGFMIPQVTAAALVSENKQLAHPASVDSIPTSANQEDHVSMAAHGARRLLAMTANLEGVVAIELLAAAQGCDFHAPLTSSEALERVRARLRRDVPSLDHDRHFAPDIAAAQAIVRAGELAFPDLPGVA.

Positions 142–144 (ASG) form a cross-link, 5-imidazolinone (Ala-Gly). Residue serine 143 is modified to 2,3-didehydroalanine (Ser).

This sequence belongs to the PAL/histidase family. Contains an active site 4-methylidene-imidazol-5-one (MIO), which is formed autocatalytically by cyclization and dehydration of residues Ala-Ser-Gly.

The protein resides in the cytoplasm. It carries out the reaction L-histidine = trans-urocanate + NH4(+). Its pathway is amino-acid degradation; L-histidine degradation into L-glutamate; N-formimidoyl-L-glutamate from L-histidine: step 1/3. The polypeptide is Histidine ammonia-lyase (Phenylobacterium zucineum (strain HLK1)).